Reading from the N-terminus, the 168-residue chain is ATP synthase subunit b (168 aa).

A helical membrane pass occupies residues 9-29 (SIPFGTIAYTLFIFLLLLVML).

It belongs to the ATPase B chain family. F-type ATPases have 2 components, F(1) - the catalytic core - and F(0) - the membrane proton channel. F(1) has five subunits: alpha(3), beta(3), gamma(1), delta(1), epsilon(1). F(0) has three main subunits: a(1), b(2) and c(10-14). The alpha and beta chains form an alternating ring which encloses part of the gamma chain. F(1) is attached to F(0) by a central stalk formed by the gamma and epsilon chains, while a peripheral stalk is formed by the delta and b chains.

The protein resides in the cell membrane. Functionally, f(1)F(0) ATP synthase produces ATP from ADP in the presence of a proton or sodium gradient. F-type ATPases consist of two structural domains, F(1) containing the extramembraneous catalytic core and F(0) containing the membrane proton channel, linked together by a central stalk and a peripheral stalk. During catalysis, ATP synthesis in the catalytic domain of F(1) is coupled via a rotary mechanism of the central stalk subunits to proton translocation. Component of the F(0) channel, it forms part of the peripheral stalk, linking F(1) to F(0). The sequence is that of ATP synthase subunit b from Bacillus mycoides (strain KBAB4) (Bacillus weihenstephanensis).